The following is a 252-amino-acid chain: tRNA (guanine-N(1)-)-methyltransferase (252 aa).

S-adenosyl-L-methionine contacts are provided by residues Gly-113 and 133-138 (LGDYVL).

Belongs to the RNA methyltransferase TrmD family. In terms of assembly, homodimer.

It is found in the cytoplasm. The catalysed reaction is guanosine(37) in tRNA + S-adenosyl-L-methionine = N(1)-methylguanosine(37) in tRNA + S-adenosyl-L-homocysteine + H(+). Its function is as follows. Specifically methylates guanosine-37 in various tRNAs. This is tRNA (guanine-N(1)-)-methyltransferase from Stenotrophomonas maltophilia (strain K279a).